Here is a 215-residue protein sequence, read N- to C-terminus: Probable cutinase 3 (215 aa).

The N-terminal stretch at Met1–Ala17 is a signal peptide. Cystine bridges form between Cys39-Cys118 and Cys65-Cys79. Catalysis depends on Ser129, which acts as the Nucleophile. Residues Cys180 and Cys187 are joined by a disulfide bond. Asp184 is an active-site residue. The active-site Proton donor/acceptor is His197.

It belongs to the cutinase family.

It is found in the secreted. It catalyses the reaction cutin + H2O = cutin monomers.. Functionally, catalyzes the hydrolysis of complex carboxylic polyesters found in the cell wall of plants. Degrades cutin, a macromolecule that forms the structure of the plant cuticle. In Aspergillus clavatus (strain ATCC 1007 / CBS 513.65 / DSM 816 / NCTC 3887 / NRRL 1 / QM 1276 / 107), this protein is Probable cutinase 3.